The primary structure comprises 151 residues: 6,7-dimethyl-8-ribityllumazine synthase (151 aa).

5-amino-6-(D-ribitylamino)uracil contacts are provided by residues F23, 55-57 (AYE), and 79-81 (AVI). Position 84 to 85 (84 to 85 (AT)) interacts with (2S)-2-hydroxy-3-oxobutyl phosphate. H87 (proton donor) is an active-site residue. F111 lines the 5-amino-6-(D-ribitylamino)uracil pocket. Residue R125 coordinates (2S)-2-hydroxy-3-oxobutyl phosphate.

This sequence belongs to the DMRL synthase family.

It catalyses the reaction (2S)-2-hydroxy-3-oxobutyl phosphate + 5-amino-6-(D-ribitylamino)uracil = 6,7-dimethyl-8-(1-D-ribityl)lumazine + phosphate + 2 H2O + H(+). Its pathway is cofactor biosynthesis; riboflavin biosynthesis; riboflavin from 2-hydroxy-3-oxobutyl phosphate and 5-amino-6-(D-ribitylamino)uracil: step 1/2. Functionally, catalyzes the formation of 6,7-dimethyl-8-ribityllumazine by condensation of 5-amino-6-(D-ribitylamino)uracil with 3,4-dihydroxy-2-butanone 4-phosphate. This is the penultimate step in the biosynthesis of riboflavin. In Leptospira interrogans serogroup Icterohaemorrhagiae serovar Lai (strain 56601), this protein is 6,7-dimethyl-8-ribityllumazine synthase.